We begin with the raw amino-acid sequence, 298 residues long: tRNA dimethylallyltransferase (298 aa).

16–23 (GPTASGKS) contributes to the ATP binding site. Substrate is bound at residue 18 to 23 (TASGKS). 2 interaction with substrate tRNA regions span residues 41-44 (DSMQ) and 165-169 (QRIVR).

This sequence belongs to the IPP transferase family. As to quaternary structure, monomer. Mg(2+) serves as cofactor.

It carries out the reaction adenosine(37) in tRNA + dimethylallyl diphosphate = N(6)-dimethylallyladenosine(37) in tRNA + diphosphate. Its function is as follows. Catalyzes the transfer of a dimethylallyl group onto the adenine at position 37 in tRNAs that read codons beginning with uridine, leading to the formation of N6-(dimethylallyl)adenosine (i(6)A). This is tRNA dimethylallyltransferase from Rhizobium rhizogenes (strain K84 / ATCC BAA-868) (Agrobacterium radiobacter).